We begin with the raw amino-acid sequence, 498 residues long: Lysine--tRNA ligase (498 aa).

E409 and E416 together coordinate Mg(2+).

This sequence belongs to the class-II aminoacyl-tRNA synthetase family. In terms of assembly, homodimer. Requires Mg(2+) as cofactor.

It is found in the cytoplasm. The enzyme catalyses tRNA(Lys) + L-lysine + ATP = L-lysyl-tRNA(Lys) + AMP + diphosphate. The protein is Lysine--tRNA ligase of Teredinibacter turnerae (strain ATCC 39867 / T7901).